The sequence spans 258 residues: U6 snRNA phosphodiesterase 1 (258 aa).

A disordered region spans residues 1–20; it reads MALVDYGGSSSSASEDEDCT. His-117 acts as the Proton acceptor in catalysis. AMP-binding positions include 117–119, Tyr-200, and 202–208; these read HLS and PASFHVS. Residues Tyr-200 and 204-208 each bind UMP; that span reads SFHVS. His-206 serves as the catalytic Proton donor.

This sequence belongs to the 2H phosphoesterase superfamily. USB1 family.

The protein localises to the nucleus. It catalyses the reaction a 3'-end uridylyl-uridine-RNA = a 3'-end 2',3'-cyclophospho-uridine-RNA + uridine. In terms of biological role, 3'-5' RNA exonuclease that trims the 3' end of oligo(U) tracts of the pre-U6 small nuclear RNA (snRNA) molecule, leading to the formation of a mature U6 snRNA 3' end-terminated with a 2',3'-cyclic phosphate. Participates in the U6 snRNA 3' end processing that prevents U6 snRNA degradation. This chain is U6 snRNA phosphodiesterase 1, found in Drosophila melanogaster (Fruit fly).